An 88-amino-acid polypeptide reads, in one-letter code: uncharacterized protein (88 aa).

This is an uncharacterized protein from Archaeoglobus fulgidus (strain ATCC 49558 / DSM 4304 / JCM 9628 / NBRC 100126 / VC-16).